The primary structure comprises 141 residues: Cystatin (141 aa).

Residues 1-26 (MVRSQLPVAAPLRLLCALLLLPSATM) form the signal peptide. Positions 29–129 (GGLSPRSVTD…CHFQVWSRPW (101 aa)) constitute a Cystatin domain. The Secondary area of contact signature appears at 73–77 (QVVSG). 2 cysteine pairs are disulfide-bonded: Cys91/Cys107 and Cys120/Cys140.

The protein belongs to the cystatin family. As to expression, expressed at a low level by the venom gland (at protein level).

The protein resides in the secreted. Inhibits various C1 cysteine proteases including cathepsin L, papain and cathepsin B. This protein has no toxic activity and its function in the venom is unknown. It may play a role as a housekeeping or regulatory protein. This is Cystatin from Micropechis ikaheca (New Guinean small-eyed snake).